A 232-amino-acid polypeptide reads, in one-letter code: N-acetyltransferase 8B (232 aa).

Over 1 to 62 (MPRFEAQKSS…FLLLLGVPLA (62 aa)) the chain is Cytoplasmic. The helical; Signal-anchor for type II membrane protein transmembrane segment at 63–83 (LVLVSGSWILAVICIFFLLLL) threads the bilayer. The 146-residue stretch at 79–224 (FLLLLLRLLA…WRLVDICFIQ (146 aa)) folds into the N-acetyltransferase domain. The Lumenal portion of the chain corresponds to 84-232 (LRLLARQPWK…IQLNYSFPSA (149 aa)). Residue Lys-109 is modified to N6-acetyllysine.

The protein belongs to the NAT8 family. Acetylation on Lys-109 modulates enzymatic activity. Expressed in brain (at protein level).

It is found in the endoplasmic reticulum-Golgi intermediate compartment membrane. The protein resides in the endoplasmic reticulum membrane. The enzyme catalyses L-lysyl-[protein] + acetyl-CoA = N(6)-acetyl-L-lysyl-[protein] + CoA + H(+). Endoplasmic reticulum (ER)-membrane-bound lysine N-acetyltransferase catalyzing the N6-acetylation of lysine residues in the lumen of the ER in various proteins, including PROM1 and BACE1, using acetyl-CoA as acetyl donor. Thereby, may regulate apoptosis through the acetylation and the regulation of the expression of PROM1. Acetylates and stabilizes BACE1 immature protein, leading to increased steady-state levels in neurons. By acting on BACE1 expression, may regulate amyloid beta-peptide formation. N(6)-lysine acetylation in ER maintains protein homeostasis and regulates reticulophagy. The sequence is that of N-acetyltransferase 8B from Mus musculus (Mouse).